Reading from the N-terminus, the 376-residue chain is GTPase Obg (376 aa).

The region spanning 1–158 (MFIDSVNLTL…RDVRLELKLI (158 aa)) is the Obg domain. One can recognise an OBG-type G domain in the interval 159–359 (ADVGLVGFPN…LKFSLLELLK (201 aa)). GTP-binding positions include 165–172 (GFPNVGKS), 190–194 (FTTLT), 212–215 (DIPG), 280–283 (TRMD), and 340–342 (SSA). 2 residues coordinate Mg(2+): Ser-172 and Thr-192.

It belongs to the TRAFAC class OBG-HflX-like GTPase superfamily. OBG GTPase family. As to quaternary structure, monomer. Requires Mg(2+) as cofactor.

Its subcellular location is the cytoplasm. Its function is as follows. An essential GTPase which binds GTP, GDP and possibly (p)ppGpp with moderate affinity, with high nucleotide exchange rates and a fairly low GTP hydrolysis rate. Plays a role in control of the cell cycle, stress response, ribosome biogenesis and in those bacteria that undergo differentiation, in morphogenesis control. This Campylobacter curvus (strain 525.92) protein is GTPase Obg.